A 365-amino-acid polypeptide reads, in one-letter code: MESFVDEVAIEVFAGHGGAGSVHFRREKYVEFGGPDGGDGGTGGNVIIRPNLSMYTLDKYLSKRKFKAEAGFPGVGDNCSGKKGEDLILFVPLGTQIYDEETGDLLFDFVTDTQEFVVARGGRGGKGNTHFKSSTNQTPRFAQPGEEGEYKFLRLSLKLLADVGIVGLPNAGKSTLISKITDAHPKIAGYAFTTLSPNLGVVKRRGDIFRFTIADIPGIIEGASMGIGLGLSFLRHIERVKGILYLFDASSLDIEEDLKMLRNELFTYNPELLNRPYLIVLNKIDIWDDPEFTKDIISKIIHLGKVIAISADKETNLEKLLEAMDEAFFKDEIEKVLKSTKELKSVSLNESDILGSFENSREIKE.

The Obg domain occupies Glu-2–Leu-160. The region spanning Ala-161–Phe-329 is the OBG-type G domain. GTP contacts are provided by residues Gly-167–Ser-174, Phe-192–Ser-196, Asp-215–Gly-218, Asn-282–Asp-285, and Ser-310–Asp-312. Mg(2+) is bound by residues Ser-174 and Thr-194.

It belongs to the TRAFAC class OBG-HflX-like GTPase superfamily. OBG GTPase family. Monomer. It depends on Mg(2+) as a cofactor.

Its subcellular location is the cytoplasm. In terms of biological role, an essential GTPase which binds GTP, GDP and possibly (p)ppGpp with moderate affinity, with high nucleotide exchange rates and a fairly low GTP hydrolysis rate. Plays a role in control of the cell cycle, stress response, ribosome biogenesis and in those bacteria that undergo differentiation, in morphogenesis control. The protein is GTPase Obg of Leptospira borgpetersenii serovar Hardjo-bovis (strain JB197).